Here is a 180-residue protein sequence, read N- to C-terminus: Ribulose bisphosphate carboxylase small subunit, chloroplastic (180 aa).

A chloroplast-targeting transit peptide spans 1–57 (MASVVASAAVVTPFAASAASTTKSSQIVSVQAGLKAGVFGGKSEWQTKTQTNGSRVS).

The protein belongs to the RuBisCO small chain family. In terms of assembly, heterohexadecamer of 8 large and 8 small subunits.

It is found in the plastid. The protein resides in the chloroplast. In terms of biological role, ruBisCO catalyzes two reactions: the carboxylation of D-ribulose 1,5-bisphosphate, the primary event in carbon dioxide fixation, as well as the oxidative fragmentation of the pentose substrate. Both reactions occur simultaneously and in competition at the same active site. Although the small subunit is not catalytic it is essential for maximal activity. The polypeptide is Ribulose bisphosphate carboxylase small subunit, chloroplastic (Marchantia paleacea (Liverwort)).